The following is a 343-amino-acid chain: Glyceraldehyde-3-phosphate dehydrogenase (343 aa).

NAD(+) is bound by residues 11-12 (TI) and glycine 110. 139 to 141 (SCN) lines the D-glyceraldehyde 3-phosphate pocket. The active-site Nucleophile is cysteine 140. Position 168 (arginine 168) interacts with NAD(+). Residue 194-195 (HG) coordinates D-glyceraldehyde 3-phosphate. Residue glutamine 301 coordinates NAD(+).

Belongs to the glyceraldehyde-3-phosphate dehydrogenase family. In terms of assembly, homotetramer.

It is found in the cytoplasm. The catalysed reaction is D-glyceraldehyde 3-phosphate + phosphate + NADP(+) = (2R)-3-phospho-glyceroyl phosphate + NADPH + H(+). It catalyses the reaction D-glyceraldehyde 3-phosphate + phosphate + NAD(+) = (2R)-3-phospho-glyceroyl phosphate + NADH + H(+). The protein operates within carbohydrate degradation; glycolysis; pyruvate from D-glyceraldehyde 3-phosphate: step 1/5. The protein is Glyceraldehyde-3-phosphate dehydrogenase of Methanoregula boonei (strain DSM 21154 / JCM 14090 / 6A8).